Here is an 88-residue protein sequence, read N- to C-terminus: Putative regulatory protein AM1_5498 (88 aa).

The protein belongs to the RemA family.

The chain is Putative regulatory protein AM1_5498 from Acaryochloris marina (strain MBIC 11017).